The chain runs to 142 residues: Large ribosomal subunit protein uL13 (142 aa).

It belongs to the universal ribosomal protein uL13 family. As to quaternary structure, part of the 50S ribosomal subunit.

In terms of biological role, this protein is one of the early assembly proteins of the 50S ribosomal subunit, although it is not seen to bind rRNA by itself. It is important during the early stages of 50S assembly. This chain is Large ribosomal subunit protein uL13, found in Caldicellulosiruptor bescii (strain ATCC BAA-1888 / DSM 6725 / KCTC 15123 / Z-1320) (Anaerocellum thermophilum).